A 206-amino-acid chain; its full sequence is FMN-dependent NADH:quinone oxidoreductase 1 (206 aa).

FMN contacts are provided by residues Ser-9, 15–17, and 139–142; these read SVS and SRGG.

This sequence belongs to the azoreductase type 1 family. In terms of assembly, homodimer. It depends on FMN as a cofactor.

The catalysed reaction is 2 a quinone + NADH + H(+) = 2 a 1,4-benzosemiquinone + NAD(+). It catalyses the reaction N,N-dimethyl-1,4-phenylenediamine + anthranilate + 2 NAD(+) = 2-(4-dimethylaminophenyl)diazenylbenzoate + 2 NADH + 2 H(+). Quinone reductase that provides resistance to thiol-specific stress caused by electrophilic quinones. Functionally, also exhibits azoreductase activity. Catalyzes the reductive cleavage of the azo bond in aromatic azo compounds to the corresponding amines. This Cupriavidus pinatubonensis (strain JMP 134 / LMG 1197) (Cupriavidus necator (strain JMP 134)) protein is FMN-dependent NADH:quinone oxidoreductase 1.